The chain runs to 316 residues: Ribosomal RNA small subunit methyltransferase H (316 aa).

S-adenosyl-L-methionine-binding positions include 35–37 (SGH), Asp-55, Phe-84, Asp-105, and Gln-112.

Belongs to the methyltransferase superfamily. RsmH family.

The protein resides in the cytoplasm. It catalyses the reaction cytidine(1402) in 16S rRNA + S-adenosyl-L-methionine = N(4)-methylcytidine(1402) in 16S rRNA + S-adenosyl-L-homocysteine + H(+). Functionally, specifically methylates the N4 position of cytidine in position 1402 (C1402) of 16S rRNA. The polypeptide is Ribosomal RNA small subunit methyltransferase H (Streptococcus equi subsp. equi (strain 4047)).